Reading from the N-terminus, the 185-residue chain is Ribosome-recycling factor (185 aa).

This sequence belongs to the RRF family.

The protein resides in the cytoplasm. Its function is as follows. Responsible for the release of ribosomes from messenger RNA at the termination of protein biosynthesis. May increase the efficiency of translation by recycling ribosomes from one round of translation to another. This is Ribosome-recycling factor from Campylobacter concisus (strain 13826).